The primary structure comprises 143 residues: Transcriptional regulator SlyA (143 aa).

The 134-residue stretch at 2 to 135 folds into the HTH marR-type domain; that stretch reads ESTLGSDLAR…LSGLIDKLER (134 aa). The segment at residues 49-72 is a DNA-binding region (H-T-H motif); it reads QIQLAKAIGIEQPSLVRTLDQLEE.

It belongs to the SlyA family. In terms of assembly, homodimer.

Transcription regulator that can specifically activate or repress expression of target genes. This chain is Transcriptional regulator SlyA, found in Yersinia enterocolitica serotype O:8 / biotype 1B (strain NCTC 13174 / 8081).